Consider the following 454-residue polypeptide: tRNA modification GTPase MnmE (454 aa).

Residues Arg23, Glu80, and Lys120 each coordinate (6S)-5-formyl-5,6,7,8-tetrahydrofolate. The 162-residue stretch at 216 to 377 folds into the TrmE-type G domain; the sequence is GMKVVIAGRP…LRNHLKQSMG (162 aa). Position 226 (Asn226) interacts with K(+). GTP contacts are provided by residues 226–231, 245–251, 270–273, 335–338, and 358–360; these read NAGKSS, TDIAGTT, DTAG, NKAD, and SAR. Ser230 contacts Mg(2+). K(+) contacts are provided by Thr245, Ile247, and Thr250. Mg(2+) is bound at residue Thr251. Lys454 serves as a coordination point for (6S)-5-formyl-5,6,7,8-tetrahydrofolate.

It belongs to the TRAFAC class TrmE-Era-EngA-EngB-Septin-like GTPase superfamily. TrmE GTPase family. In terms of assembly, homodimer. Heterotetramer of two MnmE and two MnmG subunits. Requires K(+) as cofactor.

The protein localises to the cytoplasm. Functionally, exhibits a very high intrinsic GTPase hydrolysis rate. Involved in the addition of a carboxymethylaminomethyl (cmnm) group at the wobble position (U34) of certain tRNAs, forming tRNA-cmnm(5)s(2)U34. The chain is tRNA modification GTPase MnmE from Salmonella choleraesuis (strain SC-B67).